The sequence spans 209 residues: Glycolipid transfer protein B (209 aa).

2 consecutive repeat copies span residues 45–55 and 56–66. The interval 45-66 is 2 X 12 AA approximate tandem repeats; the sequence is IKADITGNITKIRSVYESNPTQ. 48–55 lines the beta-D-galactosyl-(1-&gt;4)-beta-D-glucosyl-(1&lt;-&gt;1)-N-[(9Z)-octadecenoyl]-sphing-4-enine pocket; the sequence is DITGNITK. Beta-D-galactosyl-(1-&gt;4)-beta-D-glucosyl-(1&lt;-&gt;1)-N-[(9Z)-octadecenoyl]-sphing-4-enine-binding residues include H140 and Y207.

It belongs to the GLTP family.

It is found in the cytoplasm. Its function is as follows. Accelerates the intermembrane transfer of various glycolipids. Catalyzes the transfer of various glycosphingolipids between membranes but does not catalyze the transfer of phospholipids. May be involved in the intracellular translocation of glucosylceramides. The protein is Glycolipid transfer protein B (gltp-b) of Xenopus laevis (African clawed frog).